The chain runs to 174 residues: NADH-ubiquinone oxidoreductase chain 6 (174 aa).

Helical transmembrane passes span 1-21, 24-44, 47-67, 86-106, and 151-171; these read MTYVLFLLSVGLVMGFVGFSS, SPIYGGLVLIVSGVVGCAIIL, GGGYMGLMVFLIYLGGMMVVF, VEVLVSVLVGLAMEVGLVLWV, and WLVVVTGWTLFVGVYIVIEIA.

Belongs to the complex I subunit 6 family. In terms of assembly, core subunit of respiratory chain NADH dehydrogenase (Complex I) which is composed of 45 different subunits.

The protein resides in the mitochondrion inner membrane. It carries out the reaction a ubiquinone + NADH + 5 H(+)(in) = a ubiquinol + NAD(+) + 4 H(+)(out). Core subunit of the mitochondrial membrane respiratory chain NADH dehydrogenase (Complex I) which catalyzes electron transfer from NADH through the respiratory chain, using ubiquinone as an electron acceptor. Essential for the catalytic activity and assembly of complex I. In Gorilla gorilla gorilla (Western lowland gorilla), this protein is NADH-ubiquinone oxidoreductase chain 6 (MT-ND6).